Here is a 363-residue protein sequence, read N- to C-terminus: Pyrimidine monooxygenase RutA (363 aa).

Residues 49–50, Asn-115, Glu-124, 140–141, and Ser-190 each bind FMN; these read IK and RY.

Belongs to the NtaA/SnaA/DszA monooxygenase family. RutA subfamily.

The catalysed reaction is uracil + FMNH2 + NADH + O2 = (Z)-3-ureidoacrylate + FMN + NAD(+) + H2O + H(+). The enzyme catalyses thymine + FMNH2 + NADH + O2 = (Z)-2-methylureidoacrylate + FMN + NAD(+) + H2O + H(+). Catalyzes the pyrimidine ring opening between N-3 and C-4 by an unusual flavin hydroperoxide-catalyzed mechanism, adding oxygen atoms in the process to yield ureidoacrylate peracid, that immediately reacts with FMN forming ureidoacrylate and FMN-N(5)-oxide. The FMN-N(5)-oxide reacts spontaneously with NADH to produce FMN. Requires the flavin reductase RutF to regenerate FMN in vivo. This chain is Pyrimidine monooxygenase RutA, found in Enterobacter cloacae subsp. cloacae (strain ATCC 13047 / DSM 30054 / NBRC 13535 / NCTC 10005 / WDCM 00083 / NCDC 279-56).